We begin with the raw amino-acid sequence, 271 residues long: Tryptophan synthase alpha chain (271 aa).

Residues E49 and D60 each act as proton acceptor in the active site.

The protein belongs to the TrpA family. In terms of assembly, tetramer of two alpha and two beta chains.

The enzyme catalyses (1S,2R)-1-C-(indol-3-yl)glycerol 3-phosphate + L-serine = D-glyceraldehyde 3-phosphate + L-tryptophan + H2O. The protein operates within amino-acid biosynthesis; L-tryptophan biosynthesis; L-tryptophan from chorismate: step 5/5. In terms of biological role, the alpha subunit is responsible for the aldol cleavage of indoleglycerol phosphate to indole and glyceraldehyde 3-phosphate. The protein is Tryptophan synthase alpha chain of Burkholderia ambifaria (strain MC40-6).